The primary structure comprises 162 residues: Large ribosomal subunit protein uL10 (162 aa).

This sequence belongs to the universal ribosomal protein uL10 family. As to quaternary structure, part of the ribosomal stalk of the 50S ribosomal subunit. The N-terminus interacts with L11 and the large rRNA to form the base of the stalk. The C-terminus forms an elongated spine to which L12 dimers bind in a sequential fashion forming a multimeric L10(L12)X complex.

In terms of biological role, forms part of the ribosomal stalk, playing a central role in the interaction of the ribosome with GTP-bound translation factors. In Phytoplasma mali (strain AT), this protein is Large ribosomal subunit protein uL10.